The sequence spans 214 residues: ATP-dependent Clp protease proteolytic subunit (214 aa).

The active-site Nucleophile is the Ser106. His131 is an active-site residue.

The protein belongs to the peptidase S14 family. As to quaternary structure, fourteen ClpP subunits assemble into 2 heptameric rings which stack back to back to give a disk-like structure with a central cavity, resembling the structure of eukaryotic proteasomes.

It localises to the cytoplasm. The catalysed reaction is Hydrolysis of proteins to small peptides in the presence of ATP and magnesium. alpha-casein is the usual test substrate. In the absence of ATP, only oligopeptides shorter than five residues are hydrolyzed (such as succinyl-Leu-Tyr-|-NHMec, and Leu-Tyr-Leu-|-Tyr-Trp, in which cleavage of the -Tyr-|-Leu- and -Tyr-|-Trp bonds also occurs).. Cleaves peptides in various proteins in a process that requires ATP hydrolysis. Has a chymotrypsin-like activity. Plays a major role in the degradation of misfolded proteins. This chain is ATP-dependent Clp protease proteolytic subunit, found in Rhodopseudomonas palustris (strain BisB5).